Here is a 412-residue protein sequence, read N- to C-terminus: Alanyl-tRNA editing protein Aarsd1 (412 aa).

Residues His109 and His113 each coordinate Zn(2+). The residue at position 174 (Ser174) is a Phosphoserine. Cys209 and His213 together coordinate Zn(2+).

It belongs to the class-II aminoacyl-tRNA synthetase family. Alax-L subfamily. The cofactor is Zn(2+).

It is found in the cytoplasm. Functions in trans to edit the amino acid moiety from incorrectly charged tRNA(Ala). The protein is Alanyl-tRNA editing protein Aarsd1 (Aarsd1) of Rattus norvegicus (Rat).